Consider the following 667-residue polypeptide: tRNA uridine 5-carboxymethylaminomethyl modification enzyme MnmG (667 aa).

13 to 18 contacts FAD; that stretch reads GGGHAG. 280-294 is a binding site for NAD(+); that stretch reads GPRYCPSVEDKINRF.

It belongs to the MnmG family. Homodimer. Heterotetramer of two MnmE and two MnmG subunits. The cofactor is FAD.

It localises to the cytoplasm. Functionally, NAD-binding protein involved in the addition of a carboxymethylaminomethyl (cmnm) group at the wobble position (U34) of certain tRNAs, forming tRNA-cmnm(5)s(2)U34. The sequence is that of tRNA uridine 5-carboxymethylaminomethyl modification enzyme MnmG from Polaromonas naphthalenivorans (strain CJ2).